Here is a 513-residue protein sequence, read N- to C-terminus: GMP synthase [glutamine-hydrolyzing] (513 aa).

Residues 5–196 (QILILDFGSQ…LYDIAKCNKD (192 aa)) form the Glutamine amidotransferase type-1 domain. Catalysis depends on Cys-83, which acts as the Nucleophile. Residues His-170 and Glu-172 contribute to the active site. The region spanning 197–388 (WNLDDFIDQQ…LGLPEEMINR (192 aa)) is the GMPS ATP-PPase domain. 224-230 (SGGVDSS) provides a ligand contact to ATP.

Homodimer.

It catalyses the reaction XMP + L-glutamine + ATP + H2O = GMP + L-glutamate + AMP + diphosphate + 2 H(+). Its pathway is purine metabolism; GMP biosynthesis; GMP from XMP (L-Gln route): step 1/1. Catalyzes the synthesis of GMP from XMP. This is GMP synthase [glutamine-hydrolyzing] from Mesoplasma florum (strain ATCC 33453 / NBRC 100688 / NCTC 11704 / L1) (Acholeplasma florum).